The following is a 72-amino-acid chain: Metallothionein-like protein 1 (72 aa).

The protein belongs to the metallothionein superfamily. Type 15 family.

Its function is as follows. Metallothioneins have a high content of cysteine residues that bind various heavy metals. The sequence is that of Metallothionein-like protein 1 from Erythranthe guttata (Yellow monkey flower).